Reading from the N-terminus, the 115-residue chain is MAAIPASGSLVATHDYYRRRIGSTSSSSSCGSSEYSGEVIPHHPGLPKQDSGHWWSSFFFGKQNLPGMGTVAEEAQQKSGVVSVTNGQVTCVAREMVMRQASESSDGGKSEAGNS.

The disordered stretch occupies residues 21–48 (IGSTSSSSSCGSSEYSGEVIPHHPGLPK). Over residues 22-37 (GSTSSSSSCGSSEYSG) the composition is skewed to low complexity.

It belongs to the PPDPF family.

In terms of biological role, probable regulator of exocrine pancreas development. The chain is Pancreatic progenitor cell differentiation and proliferation factor B (ppdpfb) from Danio rerio (Zebrafish).